Here is a 253-residue protein sequence, read N- to C-terminus: 28 kDa inner dynein arm light chain, axonemal (253 aa).

Residues 19 to 44 (TSKDKGKGAKGTPGKKGALPPVEQKP) are disordered. Residues 160 to 239 (IRKALQTEQG…LKQQLETFLV (80 aa)) are a coiled coil.

It belongs to the inner dynein arm light chain family.

The protein localises to the cytoplasm. It is found in the cytoskeleton. Its subcellular location is the flagellum axoneme. Functionally, plays a dynamic role in flagellar motility. May be necessary for stable assembly of a subset of inner dynein arms or for the binding of these arms to the outer doublet microtubules of the axoneme. This is 28 kDa inner dynein arm light chain, axonemal (IDA4) from Chlamydomonas reinhardtii (Chlamydomonas smithii).